A 25-amino-acid chain; its full sequence is IEHNAEEIRKTAIRTAVQNTAQQTK.

The segment covering 1 to 10 (IEHNAEEIRK) has biased composition (basic and acidic residues). A disordered region spans residues 1-25 (IEHNAEEIRKTAIRTAVQNTAQQTK). Residues 16-25 (AVQNTAQQTK) are compositionally biased toward polar residues.

The sequence is that of Unknown protein 4 from Lonomia obliqua (Moth).